We begin with the raw amino-acid sequence, 140 residues long: Transcription antitermination protein NusB (140 aa).

Belongs to the NusB family.

Its function is as follows. Involved in transcription antitermination. Required for transcription of ribosomal RNA (rRNA) genes. Binds specifically to the boxA antiterminator sequence of the ribosomal RNA (rrn) operons. The polypeptide is Transcription antitermination protein NusB (Myxococcus xanthus (strain DK1622)).